Reading from the N-terminus, the 357-residue chain is 4-hydroxy-2-oxovalerate aldolase (357 aa).

Residues 1 to 21 form a disordered region; it reads MSQEAARDAAAGRPVQIHDPT. In terms of domain architecture, Pyruvate carboxyltransferase spans 15–265; sequence VQIHDPTLRD…RTGIDLYRLL (251 aa). Residue 23 to 24 coordinates substrate; it reads RD. Residue Asp24 participates in Mn(2+) binding. The active-site Proton acceptor is His27. Substrate-binding residues include Ser177 and His204. Mn(2+) contacts are provided by His204 and His206.

It belongs to the 4-hydroxy-2-oxovalerate aldolase family.

The catalysed reaction is (S)-4-hydroxy-2-oxopentanoate = acetaldehyde + pyruvate. Its function is as follows. Involved in the biosynthesis of the peptidyl nucleoside antibiotic nikkomycin. In Streptomyces tendae, this protein is 4-hydroxy-2-oxovalerate aldolase.